Consider the following 333-residue polypeptide: Cap-specific mRNA (nucleoside-2'-O-)-methyltransferase (333 aa).

Tyr22 is a binding site for mRNA. S-adenosyl-L-methionine-binding residues include Gln39, Tyr66, Gly68, Gly72, Asp95, Arg97, Val116, and Asp138. The tract at residues 169-249 (PVASSLKWRC…NKIVRNKVVI (81 aa)) is binding to NPH-I. Catalysis depends on Lys175, which acts as the For methyltransferase activity. MRNA is bound by residues 177–180 (RCPF), Asp182, 205–207 (SAE), and Glu233. The span at 305–320 (SHEPIQRKISSKDSMS) shows a compositional bias: basic and acidic residues. The disordered stretch occupies residues 305 to 333 (SHEPIQRKISSKDSMSKNRNSKRSVRGNK). Basic residues predominate over residues 323 to 333 (RNSKRSVRGNK).

The protein belongs to the class I-like SAM-binding methyltransferase superfamily. Poxvirus/kinetoplastid 2'-O-MTase family. In terms of assembly, interacts with poly(A) polymerase catalytic subunit OPG063. Interacts with OPG109 and OPG123; these interactions might help linking transcription to capping and polyadenylation.

Its subcellular location is the virion. The enzyme catalyses a 5'-end (N(7)-methyl 5'-triphosphoguanosine)-ribonucleoside in mRNA + S-adenosyl-L-methionine = a 5'-end (N(7)-methyl 5'-triphosphoguanosine)-(2'-O-methyl-ribonucleoside) in mRNA + S-adenosyl-L-homocysteine + H(+). Functionally, displays methyltransferase, positive regulation of the poly(A) polymerase and transcription elongation activities. Involved in the modification of both mRNA ends and in intermediate and late gene positive transcription elongation. At the mRNAs 5' end, methylates the ribose 2' OH group of the first transcribed nucleotide, thereby producing a 2'-O-methylpurine cap. At the 3' end, functions as a processivity factor which stimulates the activity of the viral poly(A) polymerase OPG063 that creates mRNA's poly(A) tail. In the presence of OPG102, OPG063 does not dissociate from the RNA allowing tail elongation to around 250 adenylates. The sequence is that of Cap-specific mRNA (nucleoside-2'-O-)-methyltransferase (OPG102) from Cynomys gunnisoni (Gunnison's prairie dog).